The following is a 283-amino-acid chain: Pantothenate synthetase (283 aa).

30–37 (MGYFHEGH) contributes to the ATP binding site. His-37 serves as the catalytic Proton donor. Gln-61 is a binding site for (R)-pantoate. Gln-61 contacts beta-alanine. 147–150 (GEKD) contacts ATP. Position 153 (Gln-153) interacts with (R)-pantoate. Residues Val-176 and 184-187 (MSSR) contribute to the ATP site.

Belongs to the pantothenate synthetase family. Homodimer.

It localises to the cytoplasm. The catalysed reaction is (R)-pantoate + beta-alanine + ATP = (R)-pantothenate + AMP + diphosphate + H(+). Its pathway is cofactor biosynthesis; (R)-pantothenate biosynthesis; (R)-pantothenate from (R)-pantoate and beta-alanine: step 1/1. In terms of biological role, catalyzes the condensation of pantoate with beta-alanine in an ATP-dependent reaction via a pantoyl-adenylate intermediate. This chain is Pantothenate synthetase, found in Syntrophobacter fumaroxidans (strain DSM 10017 / MPOB).